The primary structure comprises 228 residues: Isoprenyl transferase (228 aa).

D15 is a catalytic residue. D15 contributes to the Mg(2+) binding site. Residues 16–19 (GNGR), W20, R28, H32, and 60–62 (STE) contribute to the substrate site. The active-site Proton acceptor is N63. Substrate-binding positions include W64, R66, R176, and 182–184 (RLS). E195 is a binding site for Mg(2+).

The protein belongs to the UPP synthase family. As to quaternary structure, homodimer. The cofactor is Mg(2+).

Its function is as follows. Catalyzes the condensation of isopentenyl diphosphate (IPP) with allylic pyrophosphates generating different type of terpenoids. This chain is Isoprenyl transferase, found in Wolinella succinogenes (strain ATCC 29543 / DSM 1740 / CCUG 13145 / JCM 31913 / LMG 7466 / NCTC 11488 / FDC 602W) (Vibrio succinogenes).